The sequence spans 237 residues: Purine nucleoside phosphorylase DeoD-type (237 aa).

His5 provides a ligand contact to a purine D-ribonucleoside. Phosphate-binding positions include Gly21, Arg25, Arg44, and 88–91; that span reads RVGS. Residues 180-182 and 204-205 each bind a purine D-ribonucleoside; these read EME and SD. Asp205 functions as the Proton donor in the catalytic mechanism.

This sequence belongs to the PNP/UDP phosphorylase family. As to quaternary structure, homohexamer; trimer of homodimers.

It catalyses the reaction a purine D-ribonucleoside + phosphate = a purine nucleobase + alpha-D-ribose 1-phosphate. It carries out the reaction a purine 2'-deoxy-D-ribonucleoside + phosphate = a purine nucleobase + 2-deoxy-alpha-D-ribose 1-phosphate. Functionally, catalyzes the reversible phosphorolytic breakdown of the N-glycosidic bond in the beta-(deoxy)ribonucleoside molecules, with the formation of the corresponding free purine bases and pentose-1-phosphate. This Edwardsiella ictaluri (strain 93-146) protein is Purine nucleoside phosphorylase DeoD-type.